Reading from the N-terminus, the 168-residue chain is uncharacterized protein (168 aa).

3 disordered regions span residues 1–35 (MGSSKSSKKDKQIHPFGTDVSTFRKLSSKEKKKLD), 48–97 (KVKK…DKGN), and 126–168 (ASIT…GLGM). Residues 29–95 (KEKKKLDEKE…KNSLSRSQDK (67 aa)) are a coiled coil. Residues 68–85 (LAEDPMVKNVAENDHDQM) show a composition bias toward basic and acidic residues. Polar residues predominate over residues 126–139 (ASITESSPSAQSNK). A compositionally biased stretch (basic and acidic residues) spans 140-150 (TNDKQREKELE). Residues 157-168 (VLHKGTKKGLGM) show a composition bias toward basic residues.

This is an uncharacterized protein from Schizosaccharomyces pombe (strain 972 / ATCC 24843) (Fission yeast).